Here is a 228-residue protein sequence, read N- to C-terminus: uncharacterized protein (228 aa).

The disordered stretch occupies residues 90-115; the sequence is TDESEESSSANNTTTTASHTLSNSKK. Positions 96-113 are enriched in low complexity; that stretch reads SSSANNTTTTASHTLSNS.

The protein resides in the cytoplasm. Its subcellular location is the cell cortex. Deletion results in antifungal drug fluconazole-resistant phenotype. This is an uncharacterized protein from Saccharomyces cerevisiae (strain ATCC 204508 / S288c) (Baker's yeast).